A 77-amino-acid chain; its full sequence is uncharacterized protein (77 aa).

Residues asparagine 57 to threonine 76 traverse the membrane as a helical segment.

Its subcellular location is the membrane. This is an uncharacterized protein from Schizosaccharomyces pombe (strain 972 / ATCC 24843) (Fission yeast).